Reading from the N-terminus, the 37-residue chain is GLFSVVTGVLKAVGKNVAKNVGGSLLEQLKCKISGGC.

The cysteines at positions 31 and 37 are disulfide-linked.

In terms of tissue distribution, expressed by the skin glands.

The protein localises to the secreted. Antimicrobial peptide. Active against the Gram-positive bacterium S.aureus (MIC=15 uM) and the Gram-negative bacterium E.coli (MIC=30 uM). This Rana dybowskii (Dybovsky's frog) protein is Brevinin-2DYe.